The following is a 278-amino-acid chain: Rhomboid protease GlpG (278 aa).

A run of 6 helical transmembrane segments spans residues 94-114 (AGPL…LMLI), 143-163 (AFLH…WYLG), 175-195 (LLVL…LFSG), 196-216 (ANFG…WLTG), 224-241 (ISLP…LIAG), and 245-267 (ILGL…LMAF). The active-site Nucleophile is serine 202. Histidine 255 is a catalytic residue.

It belongs to the peptidase S54 family.

The protein resides in the cell inner membrane. The enzyme catalyses Cleaves type-1 transmembrane domains using a catalytic dyad composed of serine and histidine that are contributed by different transmembrane domains.. Rhomboid-type serine protease that catalyzes intramembrane proteolysis. The polypeptide is Rhomboid protease GlpG (Yersinia pseudotuberculosis serotype I (strain IP32953)).